A 671-amino-acid chain; its full sequence is UvrABC system protein B (671 aa).

Residues 31 to 414 enclose the Helicase ATP-binding domain; the sequence is DGFEQGEKAQ…ELNQTDHKVE (384 aa). 44–51 contributes to the ATP binding site; it reads GATGTGKT. Positions 97–120 match the Beta-hairpin motif; that stretch reads YYDYYQPEAYVPQSDTYIEKDSSI. In terms of domain architecture, Helicase C-terminal spans 435-601; sequence QIDDLVGEVN…TIVKPIRDVI (167 aa). A UVR domain is found at 630–665; the sequence is QNMIKTLTAQMQEAAKKLDFEEAANLRDAIMDLKKQ.

The protein belongs to the UvrB family. Forms a heterotetramer with UvrA during the search for lesions. Interacts with UvrC in an incision complex.

Its subcellular location is the cytoplasm. Functionally, the UvrABC repair system catalyzes the recognition and processing of DNA lesions. A damage recognition complex composed of 2 UvrA and 2 UvrB subunits scans DNA for abnormalities. Upon binding of the UvrA(2)B(2) complex to a putative damaged site, the DNA wraps around one UvrB monomer. DNA wrap is dependent on ATP binding by UvrB and probably causes local melting of the DNA helix, facilitating insertion of UvrB beta-hairpin between the DNA strands. Then UvrB probes one DNA strand for the presence of a lesion. If a lesion is found the UvrA subunits dissociate and the UvrB-DNA preincision complex is formed. This complex is subsequently bound by UvrC and the second UvrB is released. If no lesion is found, the DNA wraps around the other UvrB subunit that will check the other stand for damage. The sequence is that of UvrABC system protein B from Lactobacillus johnsonii (strain CNCM I-12250 / La1 / NCC 533).